Consider the following 431-residue polypeptide: Levansucrase Lscbeta (431 aa).

Positions 61, 62, 148, 218, and 219 each coordinate sucrose. Residue Asp62 is the Nucleophile of the active site. Catalysis depends on Glu303, which acts as the Proton donor/acceptor.

It belongs to the glycosyl hydrolase 68 family. In terms of assembly, homodimer.

The catalysed reaction is [6)-beta-D-fructofuranosyl-(2-&gt;](n) alpha-D-glucopyranoside + sucrose = [6)-beta-D-fructofuranosyl-(2-&gt;](n+1) alpha-D-glucopyranoside + D-glucose. With respect to regulation, sucrose hydrolase activity is negatively affected by salt concentration. The levan polymerization rate is constant regardless of sucrose concentration. In terms of biological role, catalyzes the synthesis of levan, a fructose polymer, by transferring the fructosyl moiety from sucrose to a growing acceptor molecule. Also displays sucrose hydrolase activity. This chain is Levansucrase Lscbeta, found in Pseudomonas syringae pv. actinidiae.